An 861-amino-acid polypeptide reads, in one-letter code: Leucine--tRNA ligase (861 aa).

The 'HIGH' region motif lies at 42–52 (PYPSGRLHMGH). The 'KMSKS' region motif lies at 619 to 623 (KMSKS). K622 is an ATP binding site.

It belongs to the class-I aminoacyl-tRNA synthetase family.

It is found in the cytoplasm. The enzyme catalyses tRNA(Leu) + L-leucine + ATP = L-leucyl-tRNA(Leu) + AMP + diphosphate. The chain is Leucine--tRNA ligase from Haemophilus influenzae (strain ATCC 51907 / DSM 11121 / KW20 / Rd).